The sequence spans 453 residues: uncharacterized protein (453 aa).

Disordered stretches follow at residues 183–210 (GNGRSNPSKNNERGRTKAHNYKTRRSLS) and 428–453 (PDSMQHPPTFSKNNTSSNPKSHQYSK). The span at 198–207 (TKAHNYKTRR) shows a compositional bias: basic residues. Over residues 433–453 (HPPTFSKNNTSSNPKSHQYSK) the composition is skewed to polar residues.

This is an uncharacterized protein from Saccharomyces cerevisiae (strain ATCC 204508 / S288c) (Baker's yeast).